The chain runs to 109 residues: MFGKAGLGNLMKQAQQMQEKMAQVQEEIAEMEVTGESGAGLVKVTINGAHSCRRVEVDPSLLEDDKDMLEDLVAAAFNDAARRISEAQKDKMASVSNGMSLPPGFKMPF.

Belongs to the YbaB/EbfC family. As to quaternary structure, homodimer.

The protein localises to the cytoplasm. It localises to the nucleoid. Functionally, binds to DNA and alters its conformation. May be involved in regulation of gene expression, nucleoid organization and DNA protection. The chain is Nucleoid-associated protein ETA_24730 from Erwinia tasmaniensis (strain DSM 17950 / CFBP 7177 / CIP 109463 / NCPPB 4357 / Et1/99).